The sequence spans 873 residues: Alanine--tRNA ligase (873 aa).

Residues His-559, His-563, Cys-661, and His-665 each contribute to the Zn(2+) site.

Belongs to the class-II aminoacyl-tRNA synthetase family. Homotetramer. It depends on Zn(2+) as a cofactor.

It is found in the cytoplasm. The enzyme catalyses tRNA(Ala) + L-alanine + ATP = L-alanyl-tRNA(Ala) + AMP + diphosphate. Catalyzes the attachment of alanine to tRNA(Ala) in a two-step reaction: alanine is first activated by ATP to form Ala-AMP and then transferred to the acceptor end of tRNA(Ala). Also edits incorrectly charged Ser-tRNA(Ala) and Gly-tRNA(Ala) via its editing domain. The chain is Alanine--tRNA ligase from Wigglesworthia glossinidia brevipalpis.